The following is a 400-amino-acid chain: Phosphoglycerate kinase (400 aa).

Residues 24–26 (DFN), Arg-40, 63–66 (HFGR), Arg-121, and Arg-154 each bind substrate. ATP-binding positions include Lys-205, Gly-296, Glu-327, and 356 to 359 (GGDS).

It belongs to the phosphoglycerate kinase family. Monomer.

Its subcellular location is the cytoplasm. It catalyses the reaction (2R)-3-phosphoglycerate + ATP = (2R)-3-phospho-glyceroyl phosphate + ADP. It participates in carbohydrate degradation; glycolysis; pyruvate from D-glyceraldehyde 3-phosphate: step 2/5. The polypeptide is Phosphoglycerate kinase (Nostoc punctiforme (strain ATCC 29133 / PCC 73102)).